The sequence spans 228 residues: 7-cyano-7-deazaguanine synthase (228 aa).

Residue 9–19 (LSGGPDSTTVL) participates in ATP binding. Cys193, Cys203, Cys206, and Cys209 together coordinate Zn(2+).

It belongs to the QueC family. Zn(2+) serves as cofactor.

It carries out the reaction 7-carboxy-7-deazaguanine + NH4(+) + ATP = 7-cyano-7-deazaguanine + ADP + phosphate + H2O + H(+). It participates in purine metabolism; 7-cyano-7-deazaguanine biosynthesis. Its function is as follows. Catalyzes the ATP-dependent conversion of 7-carboxy-7-deazaguanine (CDG) to 7-cyano-7-deazaguanine (preQ(0)). This chain is 7-cyano-7-deazaguanine synthase, found in Rickettsia africae (strain ESF-5).